A 1077-amino-acid chain; its full sequence is Endo-1,4-beta-xylanase Y (1077 aa).

Positions 1 to 26 (MKNKRVLAKITALVVLLGVFFVLPSN) are cleaved as a signal peptide. In terms of domain architecture, CBM-cenC 1 spans 33-180 (DYEVVHDTFE…IFDDVTITRK (148 aa)). Residues 189 to 538 (YAANAVLKDM…KPAYNAVASI (350 aa)) enclose the GH10 domain. The active-site Proton donor is the Glu-337. Glu-460 functions as the Nucleophile in the catalytic mechanism. Positions 543-563 (EWGDGNNPAGGGGGGKPEEPD) are disordered. The CBM-cenC 2 domain maps to 565–714 (NGYYYHDTFE…YIDEAIGAVA (150 aa)). The Dockerin domain maps to 728-796 (PPVLLGDVNG…LLRVIDKFPV (69 aa)).

It belongs to the glycosyl hydrolase 10 (cellulase F) family.

The enzyme catalyses Endohydrolysis of (1-&gt;4)-beta-D-xylosidic linkages in xylans.. The sequence is that of Endo-1,4-beta-xylanase Y (xynY) from Acetivibrio thermocellus (Hungateiclostridium thermocellum).